A 358-amino-acid chain; its full sequence is Protein FAM187B (358 aa).

A signal peptide spans 1–17 (MLATLWLVGLSLPMLWA). Topologically, residues 18 to 322 (QRLISCPYKN…DKADSVLRRL (305 aa)) are extracellular. Residue N127 is glycosylated (N-linked (GlcNAc...) asparagine). A helical transmembrane segment spans residues 323–343 (KLMVLSISVLAVGGLLCKVVF). Residues 344 to 358 (RPVCGKKRSQVLLVK) lie on the Cytoplasmic side of the membrane.

Belongs to the FAM187 family.

The protein resides in the membrane. The chain is Protein FAM187B (Fam187b) from Mus musculus (Mouse).